A 300-amino-acid chain; its full sequence is MKITVIGAGNVGSSVAYALILREIANEIVLVDINEDLLYAKELELTQSIAALNLNIDLLCTKDYTHTKNSDIVLFSAGFARKDGQSREELLQLNTSIMLDCAKKIKDFTEDPLFIILTNPVDFLLNTLYESGIFSSKKIIAMAGVLDNARFKYELAKKLNVKMSRVDTRLIGFHNDDMVLVKSYASVKNKNISEFLNEEEFEDLENEVKTGGAKVIKHLKTSAYLAPASACIRMLESIRSGEFLPMSVILHGEFGVQNKALGVMARLGLEGVIEIMKMDLSLQEKDKLEKSLIKYQYKGE.

Position 6-12 (6-12 (IGAGNVG)) interacts with NAD(+). Residues Arg81 and Arg87 each coordinate substrate. NAD(+) is bound by residues Asn94 and 117–119 (LTN). The substrate site is built by Asn119 and Arg150. His174 acts as the Proton acceptor in catalysis.

Belongs to the LDH/MDH superfamily.

It carries out the reaction (S)-malate + NAD(+) = oxaloacetate + NADH + H(+). Its function is as follows. Catalyzes the reversible oxidation of malate to oxaloacetate. This Campylobacter jejuni subsp. jejuni serotype O:2 (strain ATCC 700819 / NCTC 11168) protein is Probable malate dehydrogenase (mdh).